A 379-amino-acid chain; its full sequence is Probable RNA methyltransferase RB6963 (379 aa).

The Proton acceptor role is filled by Glu89. The region spanning 96-332 is the Radical SAM core domain; the sequence is ATGRTTLCVS…VRYSLGNDIE (237 aa). Cysteines 103 and 335 form a disulfide. Cys110, Cys114, and Cys117 together coordinate [4Fe-4S] cluster. Residues 160–161, Ser192, 215–217, and Asn291 each bind S-adenosyl-L-methionine; these read GE and SLH. Residue Cys335 is the S-methylcysteine intermediate of the active site.

Belongs to the radical SAM superfamily. RlmN family. [4Fe-4S] cluster is required as a cofactor.

It localises to the cytoplasm. The polypeptide is Probable RNA methyltransferase RB6963 (Rhodopirellula baltica (strain DSM 10527 / NCIMB 13988 / SH1)).